Consider the following 198-residue polypeptide: tRNA (pseudouridine(54)-N(1))-methyltransferase (198 aa).

S-adenosyl-L-methionine is bound by residues Leu134 and Gly155.

The protein belongs to the methyltransferase superfamily. TrmY family. In terms of assembly, homodimer.

It localises to the cytoplasm. The enzyme catalyses pseudouridine(54) in tRNA + S-adenosyl-L-methionine = N(1)-methylpseudouridine(54) in tRNA + S-adenosyl-L-homocysteine + H(+). Specifically catalyzes the N1-methylation of pseudouridine at position 54 (Psi54) in tRNAs. In Thermococcus kodakarensis (strain ATCC BAA-918 / JCM 12380 / KOD1) (Pyrococcus kodakaraensis (strain KOD1)), this protein is tRNA (pseudouridine(54)-N(1))-methyltransferase.